Here is a 430-residue protein sequence, read N- to C-terminus: Phosphomethylpyrimidine synthase 2 (430 aa).

Substrate contacts are provided by residues N66, M95, Y124, H164, 186 to 188, 227 to 230, and E266; these read SRG and DGFR. H270 is a binding site for Zn(2+). Y293 serves as a coordination point for substrate. Zn(2+) is bound at residue H334. [4Fe-4S] cluster contacts are provided by C411, C414, and C418.

The protein belongs to the ThiC family. As to quaternary structure, homodimer. Requires [4Fe-4S] cluster as cofactor.

The catalysed reaction is 5-amino-1-(5-phospho-beta-D-ribosyl)imidazole + S-adenosyl-L-methionine = 4-amino-2-methyl-5-(phosphooxymethyl)pyrimidine + CO + 5'-deoxyadenosine + formate + L-methionine + 3 H(+). It participates in cofactor biosynthesis; thiamine diphosphate biosynthesis. Its function is as follows. Catalyzes the synthesis of the hydroxymethylpyrimidine phosphate (HMP-P) moiety of thiamine from aminoimidazole ribotide (AIR) in a radical S-adenosyl-L-methionine (SAM)-dependent reaction. The protein is Phosphomethylpyrimidine synthase 2 of Syntrophotalea carbinolica (strain DSM 2380 / NBRC 103641 / GraBd1) (Pelobacter carbinolicus).